A 255-amino-acid chain; its full sequence is Glutamate racemase (255 aa).

Substrate is bound by residues 7–8 (DS) and 39–40 (YG). Cys70 acts as the Proton donor/acceptor in catalysis. 71 to 72 (NT) lines the substrate pocket. The active-site Proton donor/acceptor is the Cys181. 182–183 (TH) contacts substrate.

The protein belongs to the aspartate/glutamate racemases family. Homodimer.

It catalyses the reaction L-glutamate = D-glutamate. The protein operates within cell wall biogenesis; peptidoglycan biosynthesis. In terms of biological role, provides the (R)-glutamate required for cell wall biosynthesis. This chain is Glutamate racemase, found in Helicobacter pylori (strain J99 / ATCC 700824) (Campylobacter pylori J99).